Consider the following 174-residue polypeptide: Large ribosomal subunit protein uL18 (174 aa).

This sequence belongs to the universal ribosomal protein uL18 family. As to quaternary structure, part of the 50S ribosomal subunit. Contacts the 5S and 23S rRNAs.

In terms of biological role, this is one of the proteins that bind and probably mediate the attachment of the 5S RNA into the large ribosomal subunit, where it forms part of the central protuberance. This chain is Large ribosomal subunit protein uL18, found in Methanosarcina acetivorans (strain ATCC 35395 / DSM 2834 / JCM 12185 / C2A).